The chain runs to 274 residues: Rhamnulose-1-phosphate aldolase (274 aa).

E117 is an active-site residue. Zn(2+) contacts are provided by H141, H143, and H212.

It belongs to the aldolase class II family. RhaD subfamily. As to quaternary structure, homotetramer. Requires Zn(2+) as cofactor.

Its subcellular location is the cytoplasm. It carries out the reaction L-rhamnulose 1-phosphate = (S)-lactaldehyde + dihydroxyacetone phosphate. It participates in carbohydrate degradation; L-rhamnose degradation; glycerone phosphate from L-rhamnose: step 3/3. Its function is as follows. Catalyzes the reversible cleavage of L-rhamnulose-1-phosphate to dihydroxyacetone phosphate (DHAP) and L-lactaldehyde. The chain is Rhamnulose-1-phosphate aldolase from Escherichia coli O81 (strain ED1a).